The primary structure comprises 215 residues: 5'-deoxynucleotidase YGK1 (215 aa).

In terms of domain architecture, HD spans 58–164; it reads ISDHMYRMGL…VKDIDKYEML (107 aa). Positions 61, 89, 90, 93, 98, 99, and 159 each coordinate a divalent metal cation.

It belongs to the HDDC2 family. Homodimer. Mn(2+) serves as cofactor. It depends on Co(2+) as a cofactor. Mg(2+) is required as a cofactor.

It catalyses the reaction a 2'-deoxyribonucleoside 5'-phosphate + H2O = a 2'-deoxyribonucleoside + phosphate. Catalyzes the dephosphorylation of the nucleoside 5'-monophosphates deoxyadenosine monophosphate (dAMP), deoxycytidine monophosphate (dCMP), deoxyguanosine monophosphate (dGMP) and deoxythymidine monophosphate (dTMP). The chain is 5'-deoxynucleotidase YGK1 from Saccharomyces cerevisiae (strain ATCC 204508 / S288c) (Baker's yeast).